Consider the following 78-residue polypeptide: Defensin-like protein 201 (78 aa).

The signal sequence occupies residues 1–22 (MRNLINFAVLIMTIFIVSASGA). Cystine bridges form between C32/C78, C41/C61, C46/C71, and C50/C73.

This sequence belongs to the DEFL family.

The protein localises to the secreted. The chain is Defensin-like protein 201 from Arabidopsis thaliana (Mouse-ear cress).